Consider the following 73-residue polypeptide: MKNIMVRDEVYEKLQKMKKGRESFSDVILRLIEGRKKRGIEILERYAGSLSDSELEKIVMEERRKFRVRSFDS.

Belongs to the UPF0330 family.

In terms of biological role, possibly the antitoxin component of a type II toxin-antitoxin (TA) system. Its cognate toxin is VapC16 (Potential). The polypeptide is Putative antitoxin VapB16 (vapB16) (Archaeoglobus fulgidus (strain ATCC 49558 / DSM 4304 / JCM 9628 / NBRC 100126 / VC-16)).